Reading from the N-terminus, the 283-residue chain is Prolyl 4-hydroxylase 1 (283 aa).

Topologically, residues M1–K6 are cytoplasmic. A helical; Signal-anchor for type II membrane protein transmembrane segment spans residues I7–L27. At A28–S283 the chain is on the lumenal side. One can recognise a Fe2OG dioxygenase domain in the interval N162–Q279. Residues H180, D182, and H260 each coordinate Fe cation. A 2-oxoglutarate-binding site is contributed by K270.

The protein belongs to the P4HA family. Fe(2+) is required as a cofactor. The cofactor is L-ascorbate.

Its subcellular location is the endoplasmic reticulum membrane. It catalyses the reaction L-prolyl-[collagen] + 2-oxoglutarate + O2 = trans-4-hydroxy-L-prolyl-[collagen] + succinate + CO2. Catalyzes the post-translational formation of 4-hydroxyproline in -Xaa-Pro-Gly- sequences in proline-rich peptide sequences of plant glycoproteins and other proteins. Hydroxylates preferentially prolines in second positions in the -Pro-Pro-Gly-triplets. Hydroxyprolines are important constituent of many plant cell wall glycoproteins such as extensins, hydroxyproline-rich glycoproteins, lectins and arabinogalactan proteins. Can hydroxylate collagen-like peptides and hypoxia-inducible transcription factor peptides. The protein is Prolyl 4-hydroxylase 1 of Arabidopsis thaliana (Mouse-ear cress).